We begin with the raw amino-acid sequence, 263 residues long: 4-hydroxy-tetrahydrodipicolinate reductase (263 aa).

Residues 7 to 12 (GFKGRM), 96 to 98 (GTT), and 122 to 125 (APNF) each bind NAD(+). His152 acts as the Proton donor/acceptor in catalysis. A (S)-2,3,4,5-tetrahydrodipicolinate-binding site is contributed by His153. Lys156 (proton donor) is an active-site residue. Position 162 to 163 (162 to 163 (GT)) interacts with (S)-2,3,4,5-tetrahydrodipicolinate.

This sequence belongs to the DapB family.

The protein localises to the cytoplasm. It catalyses the reaction (S)-2,3,4,5-tetrahydrodipicolinate + NAD(+) + H2O = (2S,4S)-4-hydroxy-2,3,4,5-tetrahydrodipicolinate + NADH + H(+). The enzyme catalyses (S)-2,3,4,5-tetrahydrodipicolinate + NADP(+) + H2O = (2S,4S)-4-hydroxy-2,3,4,5-tetrahydrodipicolinate + NADPH + H(+). It participates in amino-acid biosynthesis; L-lysine biosynthesis via DAP pathway; (S)-tetrahydrodipicolinate from L-aspartate: step 4/4. In terms of biological role, catalyzes the conversion of 4-hydroxy-tetrahydrodipicolinate (HTPA) to tetrahydrodipicolinate. The sequence is that of 4-hydroxy-tetrahydrodipicolinate reductase from Listeria monocytogenes serovar 1/2a (strain ATCC BAA-679 / EGD-e).